The following is a 213-amino-acid chain: Large ribosomal subunit protein uL3 (213 aa).

Positions 130–161 (KRGNMTHGSKNHRLPGSTGAGTTPGRVYPGKR) are disordered.

It belongs to the universal ribosomal protein uL3 family. Part of the 50S ribosomal subunit. Forms a cluster with proteins L14 and L19.

In terms of biological role, one of the primary rRNA binding proteins, it binds directly near the 3'-end of the 23S rRNA, where it nucleates assembly of the 50S subunit. In Picosynechococcus sp. (strain ATCC 27264 / PCC 7002 / PR-6) (Agmenellum quadruplicatum), this protein is Large ribosomal subunit protein uL3.